Here is a 340-residue protein sequence, read N- to C-terminus: Tetraacyldisaccharide 4'-kinase (340 aa).

50 to 57 is a binding site for ATP; the sequence is HGGGAGKT.

Belongs to the LpxK family.

The enzyme catalyses a lipid A disaccharide + ATP = a lipid IVA + ADP + H(+). Its pathway is glycolipid biosynthesis; lipid IV(A) biosynthesis; lipid IV(A) from (3R)-3-hydroxytetradecanoyl-[acyl-carrier-protein] and UDP-N-acetyl-alpha-D-glucosamine: step 6/6. Its function is as follows. Transfers the gamma-phosphate of ATP to the 4'-position of a tetraacyldisaccharide 1-phosphate intermediate (termed DS-1-P) to form tetraacyldisaccharide 1,4'-bis-phosphate (lipid IVA). The chain is Tetraacyldisaccharide 4'-kinase from Rhodopseudomonas palustris (strain BisA53).